A 338-amino-acid polypeptide reads, in one-letter code: Galactinol synthase 2 (338 aa).

Lys-105 is a catalytic residue. Mn(2+)-binding residues include Asp-121, Asp-123, and His-258.

The protein belongs to the glycosyltransferase 8 family. Galactosyltransferase subfamily. It depends on a divalent metal cation as a cofactor.

It is found in the cytoplasm. It catalyses the reaction myo-inositol + UDP-alpha-D-galactose = alpha-D-galactosyl-(1-&gt;3)-1D-myo-inositol + UDP + H(+). Galactinol synthase involved in the biosynthesis of raffinose family oligosaccharides (RFOs) that function as osmoprotectants. May promote plant stress tolerance. The protein is Galactinol synthase 2 (GOLS2) of Solanum lycopersicum (Tomato).